The following is a 903-amino-acid chain: Probable dipeptidyl-aminopeptidase B (903 aa).

Positions 1 to 83 (MGKFEDDGNS…PLISSGTKTG (83 aa)) are disordered. Over 1–90 (MGKFEDDGNS…KTGSSSRLRK (90 aa)) the chain is Cytoplasmic. The segment covering 10 to 37 (SESVPLTRQRSESLASQTSTDSGLSIAS) has biased composition (polar residues). The helical; Signal-anchor for type II membrane protein transmembrane segment at 91–111 (IVWLLVLLCVGGWVLSFVLFL) threads the bilayer. Residues 112–903 (TQKRPDTAAL…TANPKPQEST (792 aa)) are Vacuolar-facing. The segment at 121–143 (LSSASTVEIHEPGPATGGTSHGK) is disordered. Asn-268, Asn-349, and Asn-640 each carry an N-linked (GlcNAc...) asparagine glycan. The Charge relay system role is filled by Ser-754. Asn-808 carries an N-linked (GlcNAc...) asparagine glycan. Residues Asp-831 and His-864 each act as charge relay system in the active site.

The protein belongs to the peptidase S9B family.

It is found in the vacuole membrane. It catalyses the reaction Release of an N-terminal dipeptide, Xaa-Yaa-|-Zaa-, from a polypeptide, preferentially when Yaa is Pro, provided Zaa is neither Pro nor hydroxyproline.. Its function is as follows. Type IV dipeptidyl-peptidase which removes N-terminal dipeptides sequentially from polypeptides having unsubstituted N-termini provided that the penultimate residue is proline. In Penicillium rubens (strain ATCC 28089 / DSM 1075 / NRRL 1951 / Wisconsin 54-1255) (Penicillium chrysogenum), this protein is Probable dipeptidyl-aminopeptidase B (dapB).